Consider the following 395-residue polypeptide: Elongation factor Tu (395 aa).

Residues 10–204 enclose the tr-type G domain; sequence KPHVNIGTIG…AVDNYIPHPV (195 aa). Residues 19–26 form a G1 region; that stretch reads GHVDHGKT. Residue 19-26 coordinates GTP; sequence GHVDHGKT. T26 is a binding site for Mg(2+). The interval 60 to 64 is G2; the sequence is GITIS. Positions 81 to 84 are G3; the sequence is DCPG. GTP is bound by residues 81-85 and 136-139; these read DCPGH and NKVD. Residues 136–139 are G4; sequence NKVD. The tract at residues 174 to 176 is G5; sequence SAL.

Belongs to the TRAFAC class translation factor GTPase superfamily. Classic translation factor GTPase family. EF-Tu/EF-1A subfamily. In terms of assembly, monomer.

The protein resides in the cytoplasm. It catalyses the reaction GTP + H2O = GDP + phosphate + H(+). GTP hydrolase that promotes the GTP-dependent binding of aminoacyl-tRNA to the A-site of ribosomes during protein biosynthesis. This is Elongation factor Tu from Rickettsia akari (strain Hartford).